Consider the following 152-residue polypeptide: Em-like protein GEA1 (152 aa).

Composition is skewed to basic and acidic residues over residues 1–17 and 32–63; these read MASK…KAKQ and EAQE…IGHK. The tract at residues 1-63 is disordered; it reads MASKQLSREE…HEGYQEIGHK (63 aa). Tandem repeats lie at residues 44-63, 64-83, 84-103, and 104-123. Residues 44–123 are 4 X 20 AA tandem repeats; the sequence is GGQTRKEQLG…HEGYKEMGRK (80 aa). The segment at 116–152 is disordered; that stretch reads GYKEMGRKGGLSTMEKSGGERAEEEGIEIDESKFTNK.

Belongs to the small hydrophilic plant seed protein family. As to expression, in seeds only. Specifically located to vascular bundles in the cotyledon and axis of the dry seed. Also found in the epiderm and outer layers of the cortex in the embryo axis.

It is thought to provide protection for the cytoplasm during the desiccation stage of embryo development. The polypeptide is Em-like protein GEA1 (EM1) (Arabidopsis thaliana (Mouse-ear cress)).